Consider the following 177-residue polypeptide: Thaumatin-like protein (177 aa).

Positions 1-26 (MASPATSSAVLVVVLVATLAAGGANA) are cleaved as a signal peptide.

The protein belongs to the thaumatin family.

The protein resides in the secreted. The protein is Thaumatin-like protein of Oryza sativa subsp. japonica (Rice).